The primary structure comprises 148 residues: MPSRLRKTRKLRGHVSHGHGRIGKHRKHPGGRGNAGGMHHHRINFDKYHPGYFGKVGMRHYHLKRNQSFCPTVNLDKLWTLVSEQTRVNAAKNKTGAAPIIDVVRSGYYKVLGKGKLPKQPVIVKAKFFSRRAEEKIKGVGGACVLVA.

Over residues 1–30 the composition is skewed to basic residues; sequence MPSRLRKTRKLRGHVSHGHGRIGKHRKHPG. The tract at residues 1 to 37 is disordered; that stretch reads MPSRLRKTRKLRGHVSHGHGRIGKHRKHPGGRGNAGG. His39 carries the (3S)-3-hydroxyhistidine modification. N6-acetyllysine occurs at positions 47 and 55. At Ser68 the chain carries Phosphoserine. Lys110 is modified (N6-acetyllysine).

This sequence belongs to the universal ribosomal protein uL15 family. As to quaternary structure, component of the large ribosomal subunit. In terms of processing, hydroxylated on His-39 by MINA.

The protein localises to the cytoplasm. Component of the large ribosomal subunit. The ribosome is a large ribonucleoprotein complex responsible for the synthesis of proteins in the cell. The polypeptide is Large ribosomal subunit protein uL15 (RPL27A) (Bos taurus (Bovine)).